A 56-amino-acid polypeptide reads, in one-letter code: UPF0434 protein CBUD_1597.1 (56 aa).

The protein belongs to the UPF0434 family.

In Coxiella burnetii (strain Dugway 5J108-111), this protein is UPF0434 protein CBUD_1597.1.